Consider the following 650-residue polypeptide: Probable basic-leucine zipper transcription factor K (650 aa).

Positions 37–180 form a coiled coil; that stretch reads IDNNNNNYSN…KQQKQQQQEQ (144 aa). Disordered regions lie at residues 109–130 and 242–279; these read IPQQQQQEQDQQEDQDQEQEQE and TTLNTNLQSDNNNNNNNNNNNNNNNNNNNNNNNNNNNL. A compositionally biased stretch (acidic residues) spans 118–129; that stretch reads DQQEDQDQEQEQ. The segment covering 242-251 has biased composition (polar residues); it reads TTLNTNLQSD. The span at 252–278 shows a compositional bias: low complexity; sequence NNNNNNNNNNNNNNNNNNNNNNNNNNN. Positions 259–286 form a coiled coil; the sequence is NNNNNNNNNNNNNNNNNNNNLLNEKQIE. The bZIP domain maps to 305-368; sequence FNKIEKGKRN…IEIMRSEPES (64 aa). Residues 307 to 327 form a basic motif region; it reads KIEKGKRNQTESSKNFRERKK. The leucine-zipper stretch occupies residues 330 to 337; it reads IKDIELKL. The span at 452–466 shows a compositional bias: low complexity; sequence NNNNNNNNNNNNNNN. The interval 452–473 is disordered; that stretch reads NNNNNNNNNNNNNNNDNDDDNE.

It belongs to the bZIP family.

The protein resides in the nucleus. Probable transcriptional regulator. The sequence is that of Probable basic-leucine zipper transcription factor K (bzpK) from Dictyostelium discoideum (Social amoeba).